Consider the following 510-residue polypeptide: Protein ERGIC-53 (510 aa).

A signal peptide spans 1-30 (MAGSRRRGLQARVRPLFCALLLSLSRFVGG). Over 31 to 477 (DGVGGDPAAG…ELPPFPSCLS (447 aa)) the chain is Lumenal. Residues 44 to 267 (RRFEYKYSFK…DVLSFLTFQL (224 aa)) form the L-type lectin-like domain. A carbohydrate contacts are provided by serine 88 and aspartate 121. Residues aspartate 152, phenylalanine 154, and asparagine 156 each coordinate Ca(2+). 2 residues coordinate a carbohydrate: asparagine 156 and histidine 178. Aspartate 181 lines the Ca(2+) pocket. A disulfide bond links cysteine 190 and cysteine 230. 251–253 (GGL) lines the a carbohydrate pocket. Residue serine 425 is modified to Phosphoserine. Residues 478–498 (TVHFIIFVVVQTVLFIGYIMY) form a helical membrane-spanning segment. The Cytoplasmic segment spans residues 499 to 510 (RSQQEAAAKKFF). The mediates interaction with RAB3GAP1, RAB3GAP2 and UBXN6 stretch occupies residues 499–510 (RSQQEAAAKKFF). Residues 509–510 (FF) carry the ER export motif motif.

In terms of assembly, exists both as a covalent disulfide-linked homohexamer, and a complex of three disulfide-linked dimers non-covalently kept together. Interacts with MCFD2. May interact with TMEM115. Interacts with RAB3GAP1 and RAB3GAP2. Interacts with UBXN6. Interacts with SERPINA1/alpha1-antitrypsin. Interacts with BET1.

Its subcellular location is the endoplasmic reticulum-Golgi intermediate compartment membrane. The protein resides in the golgi apparatus membrane. The protein localises to the endoplasmic reticulum membrane. Mannose-specific lectin. May recognize sugar residues of glycoproteins, glycolipids, or glycosylphosphatidyl inositol anchors and may be involved in the sorting or recycling of proteins, lipids, or both. The LMAN1-MCFD2 complex forms a specific cargo receptor for the ER-to-Golgi transport of selected proteins. The protein is Protein ERGIC-53 (LMAN1) of Chlorocebus aethiops (Green monkey).